The primary structure comprises 177 residues: Small ribosomal subunit protein uS5 (177 aa).

The S5 DRBM domain occupies 19–82; that stretch reads FIEKLVAIKR…DQAQKQMIKV (64 aa).

It belongs to the universal ribosomal protein uS5 family. Part of the 30S ribosomal subunit. Contacts proteins S4 and S8.

Its function is as follows. With S4 and S12 plays an important role in translational accuracy. Functionally, located at the back of the 30S subunit body where it stabilizes the conformation of the head with respect to the body. This is Small ribosomal subunit protein uS5 from Magnetococcus marinus (strain ATCC BAA-1437 / JCM 17883 / MC-1).